The following is a 428-amino-acid chain: Serine--tRNA ligase (428 aa).

235 to 237 (TAE) provides a ligand contact to L-serine. Residue 266–268 (RSE) participates in ATP binding. Residue Glu289 coordinates L-serine. 353–356 (EISS) lines the ATP pocket. Ser389 provides a ligand contact to L-serine.

The protein belongs to the class-II aminoacyl-tRNA synthetase family. Type-1 seryl-tRNA synthetase subfamily. In terms of assembly, homodimer. The tRNA molecule binds across the dimer.

The protein localises to the cytoplasm. The catalysed reaction is tRNA(Ser) + L-serine + ATP = L-seryl-tRNA(Ser) + AMP + diphosphate + H(+). It carries out the reaction tRNA(Sec) + L-serine + ATP = L-seryl-tRNA(Sec) + AMP + diphosphate + H(+). It participates in aminoacyl-tRNA biosynthesis; selenocysteinyl-tRNA(Sec) biosynthesis; L-seryl-tRNA(Sec) from L-serine and tRNA(Sec): step 1/1. Its function is as follows. Catalyzes the attachment of serine to tRNA(Ser). Is also able to aminoacylate tRNA(Sec) with serine, to form the misacylated tRNA L-seryl-tRNA(Sec), which will be further converted into selenocysteinyl-tRNA(Sec). The sequence is that of Serine--tRNA ligase from Shewanella oneidensis (strain ATCC 700550 / JCM 31522 / CIP 106686 / LMG 19005 / NCIMB 14063 / MR-1).